Consider the following 199-residue polypeptide: Golgi to ER traffic protein 1 (199 aa).

Residues 1-11 lie on the Lumenal side of the membrane; it reads MLLPDLHPYTI. Residues 12–31 form a helical membrane-spanning segment; it reads LLSIFIVLLLKQLVASIGKS. The Cytoplasmic portion of the chain corresponds to 32 to 115; sequence TIKEFVWLVY…SIDKVSNALL (84 aa). Residues 66-116 are a coiled coil; sequence EKRAISAQDEYAKWTKLNRQADKLSAELQKLNQEIQQQKASIDKVSNALLL. The chain crosses the membrane as a helical span at residues 116–136; the sequence is LVLTTLPIWVARVLYRNTHLF. Topologically, residues 137 to 160 are lumenal; sequence YIRQGIFPKYVEWVLALPFLPNGA. The helical transmembrane segment at 161-177 threads the bilayer; sequence VGLTIWMFAVNSVVSNF. The Cytoplasmic portion of the chain corresponds to 178–199; that stretch reads AFLVSFPFAKKVSKPVRDTKIE.

It belongs to the WRB/GET1 family. As to quaternary structure, component of the Golgi to ER traffic (GET) complex, which is composed of GET1, GET2 and GET3. Within the complex, GET1 and GET2 form a heterotetramer which is stabilized by phosphatidylinositol binding and which binds to the GET3 homodimer.

It is found in the endoplasmic reticulum membrane. It localises to the golgi apparatus membrane. Functionally, required for the post-translational delivery of tail-anchored (TA) proteins to the endoplasmic reticulum. Together with GET2, acts as a membrane receptor for soluble GET3, which recognizes and selectively binds the transmembrane domain of TA proteins in the cytosol. The GET complex cooperates with the HDEL receptor ERD2 to mediate the ATP-dependent retrieval of resident ER proteins that contain a C-terminal H-D-E-L retention signal from the Golgi to the ER. This is Golgi to ER traffic protein 1 from Candida dubliniensis (strain CD36 / ATCC MYA-646 / CBS 7987 / NCPF 3949 / NRRL Y-17841) (Yeast).